A 776-amino-acid chain; its full sequence is Methionine--tRNA ligase (776 aa).

The 'HIGH' region motif lies at 10–20; it reads PYSNGPIHLGH. The Zn(2+) site is built by Cys-143, Cys-146, Cys-156, and Cys-159. Residues 375–379 carry the 'KMSKS' region motif; the sequence is KFSKS. Lys-378 provides a ligand contact to ATP. Positions 676-776 constitute a tRNA-binding domain; it reads DFAKLDMRVG…KPISLGSKVR (101 aa).

The protein belongs to the class-I aminoacyl-tRNA synthetase family. MetG type 1 subfamily. As to quaternary structure, homodimer. It depends on Zn(2+) as a cofactor.

The protein localises to the cytoplasm. The catalysed reaction is tRNA(Met) + L-methionine + ATP = L-methionyl-tRNA(Met) + AMP + diphosphate. In terms of biological role, is required not only for elongation of protein synthesis but also for the initiation of all mRNA translation through initiator tRNA(fMet) aminoacylation. The chain is Methionine--tRNA ligase (metG) from Nanoarchaeum equitans (strain Kin4-M).